We begin with the raw amino-acid sequence, 199 residues long: NAD(P)H dehydrogenase (quinone) (199 aa).

Positions 4–190 constitute a Flavodoxin-like domain; sequence VLVLYYSAYG…AGARYQGRVI (187 aa). FMN contacts are provided by residues 10-15 and 78-80; these read SAYGHI and TRF. Position 12 (Y12) interacts with NAD(+). W98 lines the substrate pocket. Residues 113 to 119 and H134 each bind FMN; that span reads STATQHG.

It belongs to the WrbA family. FMN serves as cofactor.

It catalyses the reaction a quinone + NADH + H(+) = a quinol + NAD(+). The enzyme catalyses a quinone + NADPH + H(+) = a quinol + NADP(+). This Bradyrhizobium sp. (strain ORS 278) protein is NAD(P)H dehydrogenase (quinone).